The chain runs to 883 residues: Phosphoenolpyruvate carboxylase (883 aa).

Residues His138 and Lys546 contribute to the active site.

The protein belongs to the PEPCase type 1 family. It depends on Mg(2+) as a cofactor.

The catalysed reaction is oxaloacetate + phosphate = phosphoenolpyruvate + hydrogencarbonate. Functionally, forms oxaloacetate, a four-carbon dicarboxylic acid source for the tricarboxylic acid cycle. In Salmonella choleraesuis (strain SC-B67), this protein is Phosphoenolpyruvate carboxylase.